Reading from the N-terminus, the 469-residue chain is Ribulose bisphosphate carboxylase large chain (469 aa).

At Lys-8 the chain carries N6,N6,N6-trimethyllysine. Substrate-binding residues include Asn-117 and Thr-167. Catalysis depends on Lys-169, which acts as the Proton acceptor. Position 171 (Lys-171) interacts with substrate. Mg(2+) is bound by residues Lys-195, Asp-197, and Glu-198. An N6-carboxylysine modification is found at Lys-195. Catalysis depends on His-288, which acts as the Proton acceptor. Substrate contacts are provided by Arg-289, His-321, and Ser-373.

It belongs to the RuBisCO large chain family. Type I subfamily. As to quaternary structure, heterohexadecamer of 8 large chains and 8 small chains; disulfide-linked. The disulfide link is formed within the large subunit homodimers. Requires Mg(2+) as cofactor. The disulfide bond which can form in the large chain dimeric partners within the hexadecamer appears to be associated with oxidative stress and protein turnover.

The protein localises to the plastid. The protein resides in the chloroplast. The catalysed reaction is 2 (2R)-3-phosphoglycerate + 2 H(+) = D-ribulose 1,5-bisphosphate + CO2 + H2O. The enzyme catalyses D-ribulose 1,5-bisphosphate + O2 = 2-phosphoglycolate + (2R)-3-phosphoglycerate + 2 H(+). Functionally, ruBisCO catalyzes two reactions: the carboxylation of D-ribulose 1,5-bisphosphate, the primary event in carbon dioxide fixation, as well as the oxidative fragmentation of the pentose substrate in the photorespiration process. Both reactions occur simultaneously and in competition at the same active site. This chain is Ribulose bisphosphate carboxylase large chain, found in Akania bidwillii (Turnipwood).